Consider the following 166-residue polypeptide: Urease accessory protein UreE (166 aa).

Belongs to the UreE family.

The protein localises to the cytoplasm. In terms of biological role, involved in urease metallocenter assembly. Binds nickel. Probably functions as a nickel donor during metallocenter assembly. The protein is Urease accessory protein UreE of Pseudomonas fluorescens (strain Pf0-1).